Here is a 154-residue protein sequence, read N- to C-terminus: Myoglobin (154 aa).

Residues 2–148 (GLSDGEWQLV…FRKDMASNYK (147 aa)) enclose the Globin domain. A Phosphoserine modification is found at Ser-4. His-65 provides a ligand contact to nitrite. His-65 lines the O2 pocket. Thr-68 carries the post-translational modification Phosphothreonine. His-94 lines the heme b pocket.

Belongs to the globin family. As to quaternary structure, monomeric.

The protein resides in the cytoplasm. It localises to the sarcoplasm. The enzyme catalyses Fe(III)-heme b-[protein] + nitric oxide + H2O = Fe(II)-heme b-[protein] + nitrite + 2 H(+). It carries out the reaction H2O2 + AH2 = A + 2 H2O. Functionally, monomeric heme protein which primary function is to store oxygen and facilitate its diffusion within muscle tissues. Reversibly binds oxygen through a pentacoordinated heme iron and enables its timely and efficient release as needed during periods of heightened demand. Depending on the oxidative conditions of tissues and cells, and in addition to its ability to bind oxygen, it also has a nitrite reductase activity whereby it regulates the production of bioactive nitric oxide. Under stress conditions, like hypoxia and anoxia, it also protects cells against reactive oxygen species thanks to its pseudoperoxidase activity. The polypeptide is Myoglobin (MB) (Hylobates agilis (Agile gibbon)).